The chain runs to 155 residues: Endoribonuclease YbeY (155 aa).

Positions 114, 118, and 124 each coordinate Zn(2+).

Belongs to the endoribonuclease YbeY family. It depends on Zn(2+) as a cofactor.

Its subcellular location is the cytoplasm. Functionally, single strand-specific metallo-endoribonuclease involved in late-stage 70S ribosome quality control and in maturation of the 3' terminus of the 16S rRNA. The polypeptide is Endoribonuclease YbeY (Shigella flexneri serotype 5b (strain 8401)).